We begin with the raw amino-acid sequence, 269 residues long: 3-deoxy-manno-octulosonate cytidylyltransferase (269 aa).

The protein belongs to the KdsB family.

Its subcellular location is the cytoplasm. The enzyme catalyses 3-deoxy-alpha-D-manno-oct-2-ulosonate + CTP = CMP-3-deoxy-beta-D-manno-octulosonate + diphosphate. It functions in the pathway nucleotide-sugar biosynthesis; CMP-3-deoxy-D-manno-octulosonate biosynthesis; CMP-3-deoxy-D-manno-octulosonate from 3-deoxy-D-manno-octulosonate and CTP: step 1/1. The protein operates within bacterial outer membrane biogenesis; lipopolysaccharide biosynthesis. In terms of biological role, activates KDO (a required 8-carbon sugar) for incorporation into bacterial lipopolysaccharide in Gram-negative bacteria. The protein is 3-deoxy-manno-octulosonate cytidylyltransferase of Cupriavidus necator (strain ATCC 17699 / DSM 428 / KCTC 22496 / NCIMB 10442 / H16 / Stanier 337) (Ralstonia eutropha).